Consider the following 724-residue polypeptide: Catalase-peroxidase (724 aa).

The tryptophyl-tyrosyl-methioninium (Trp-Tyr) (with M-252) cross-link spans 98–226 (WHSAGSYRLA…LAAVQMGLIY (129 aa)). His-99 serves as the catalytic Proton acceptor. The tryptophyl-tyrosyl-methioninium (Tyr-Met) (with W-98) cross-link spans 226-252 (YVNPEGVNGKPDPLKTAAQVRTTFARM). Residue His-267 participates in heme b binding.

This sequence belongs to the peroxidase family. Peroxidase/catalase subfamily. As to quaternary structure, homodimer or homotetramer. Requires heme b as cofactor. Formation of the three residue Trp-Tyr-Met cross-link is important for the catalase, but not the peroxidase activity of the enzyme.

It catalyses the reaction H2O2 + AH2 = A + 2 H2O. The catalysed reaction is 2 H2O2 = O2 + 2 H2O. Bifunctional enzyme with both catalase and broad-spectrum peroxidase activity. The protein is Catalase-peroxidase of Maricaulis maris (strain MCS10) (Caulobacter maris).